The following is an 86-amino-acid chain: Large ribosomal subunit protein bL31 (86 aa).

Cys-16, Cys-18, Cys-38, and Cys-41 together coordinate Zn(2+).

This sequence belongs to the bacterial ribosomal protein bL31 family. Type A subfamily. In terms of assembly, part of the 50S ribosomal subunit. It depends on Zn(2+) as a cofactor.

Functionally, binds the 23S rRNA. The protein is Large ribosomal subunit protein bL31 of Acidothermus cellulolyticus (strain ATCC 43068 / DSM 8971 / 11B).